The sequence spans 248 residues: E3 ubiquitin-protein ligase BIG BROTHER (248 aa).

The segment at 197 to 238 adopts an RING-type; atypical zinc-finger fold; sequence CVICQLKYKIGERQMNLPCKHVYHSECISKWLSINKVCPVCN.

As to quaternary structure, interacts with the E2 ubiquitin conjugating enzyme UBC10 via the RING domain. Interacts with DA1. Auto-ubiquitinated. Mostly expressed in inflorescence, and, to a lower extent, in seedlings, roots, stems, leaves and siliques.

The catalysed reaction is S-ubiquitinyl-[E2 ubiquitin-conjugating enzyme]-L-cysteine + [acceptor protein]-L-lysine = [E2 ubiquitin-conjugating enzyme]-L-cysteine + N(6)-ubiquitinyl-[acceptor protein]-L-lysine.. The protein operates within protein modification; protein ubiquitination. Its function is as follows. E3 ubiquitin-protein ligase that limits organ size, and possibly seed size, in a dose-dependent manner. Negatively regulates the duration of cell proliferation in leaves and petals independently of the major phytohormones (e.g. auxin, cytokinin, gibberellin, brassinosteroids, ethylene, abscisic acid, jasmonic acid), probably by targeting growth stimulators for degradation. Limits the proliferation of root meristematic cells. Polyubiquitinates DA1. Involved in the promotion of leaf senescence, in addition to its function in restricting plant growth. Possesses E3 ubiquitin-protein ligase activity in vitro. The chain is E3 ubiquitin-protein ligase BIG BROTHER (BB) from Arabidopsis thaliana (Mouse-ear cress).